Consider the following 1066-residue polypeptide: E3 ubiquitin-protein ligase RNF31 (1066 aa).

Residues 1-479 form a polyubiquitin-binding region; that stretch reads MPGDEERGFL…PEKQRQDKMR (479 aa). The PUB domain occupies 70–141; it reads TLSTALNILE…SFPEGQEEPD (72 aa). A disordered region spans residues 251-287; the sequence is LRQALPGSHQTASLSSSLPASSQPRPPSSSLALGDSS. A compositionally biased stretch (low complexity) spans 262 to 287; sequence ASLSSSLPASSQPRPPSSSLALGDSS. RanBP2-type zinc fingers lie at residues 293–325 and 344–373; these read PANA…PKGC and ARDQ…PRLA. Ser-377 bears the Phosphoserine mark. The RanBP2-type 3 zinc-finger motif lies at 403–432; it reads QPQVWYCDHCTFCNSGPVWVCAMCNRTRDP. Residues 434-478 are disordered; sequence PTQPALQSYPSSLEKGRPKPGSSQHLGSSLPASCGDPEKQRQDKM. A compositionally biased stretch (polar residues) spans 454-464; that stretch reads GSSQHLGSSLP. A compositionally biased stretch (basic and acidic residues) spans 469-478; sequence DPEKQRQDKM. The interval 557 to 610 is interaction with RBCK1; sequence GNLDEAVEECVRARRRKVHELQSLGFGPKEGSLQALFQHGGDVARALTELQRQR. The UBA domain maps to 558–609; sequence NLDEAVEECVRARRRKVHELQSLGFGPKEGSLQALFQHGGDVARALTELQRQ. Positions 689–923 are TRIAD supradomain; that stretch reads LAQECAVCGW…KSLHGHHPRD (235 aa). Residues Cys-693, Cys-696, Cys-711, Cys-713, Cys-716, Cys-719, Cys-738, Cys-741, Cys-793, Cys-796, Cys-811, Cys-814, Cys-819, Cys-822, His-830, Cys-835, Cys-865, and Cys-868 each contribute to the Zn(2+) site. The RING-type 1 zinc-finger motif lies at 693–743; the sequence is CAVCGWALPRNRMQALISCECTICPECFRQHFTIALKEKHITDMVCPACGR. The segment at 773–835 adopts an IBR-type zinc-finger fold; the sequence is ALFHKKLTEA…WEEQHRGRSC (63 aa). Residues 865–895 form an RING-type 2; atypical zinc finger; sequence CPKCKFSYALARGGCMHFHCTQCRHQFCSGC. Cys-879 is an active-site residue. 6 residues coordinate Zn(2+): Cys-884, Cys-887, Cys-892, Cys-895, Cys-910, and His-919. The interval 904-1066 is LDD domain; the sequence is KCPDPNCKVK…LGQSIARRRK (163 aa).

This sequence belongs to the RBR family. In terms of assembly, component of the LUBAC complex (linear ubiquitin chain assembly complex) which consists of SHARPIN, RBCK1 and RNF31. LUBAC has a MW of approximately 600 kDa suggesting a heteromultimeric assembly of its subunits. Associates with the TNF-R1 signaling complex (TNF-RSC) in a stimulation-dependent manner. Interacts (via the PUB domain) with OTULIN (via the PIM motif); the interaction is direct. Interacts (via the PUB domain) with VCP (via the PIM motif). Interacts (via the PUB domain) with SPATA2 (via the PIM motif); interaction is direct and bridges RNF31 and CYLD. Interacts with CYLD; the interaction is indirect and is mediated via SPATA2. Interacts with MUSK. Interacts with CARD11, promoting linear ubiquitination of BCL10. Autoubiquitinated. Interaction with OTULIN is required to suppress formation of 'Met-1'-linked polyubiquitin chains and prevent subsequent inactivation of the LUBAC complex. In terms of processing, cleaved by caspase during apoptosis. As to expression, widely expressed (at protein level). Not expressed in heart.

The protein localises to the cytoplasm. The catalysed reaction is [E2 ubiquitin-conjugating enzyme]-S-ubiquitinyl-L-cysteine + [acceptor protein]-L-lysine = [E2 ubiquitin-conjugating enzyme]-L-cysteine + [acceptor protein]-N(6)-ubiquitinyl-L-lysine.. It functions in the pathway protein modification; protein ubiquitination. In terms of biological role, E3 ubiquitin-protein ligase component of the LUBAC complex which conjugates linear ('Met-1'-linked) polyubiquitin chains to substrates and plays a key role in NF-kappa-B activation and regulation of inflammation. LUBAC conjugates linear polyubiquitin to IKBKG and RIPK1 and is involved in activation of the canonical NF-kappa-B and the JNK signaling pathways. Linear ubiquitination mediated by the LUBAC complex interferes with TNF-induced cell death and thereby prevents inflammation. LUBAC is recruited to the TNF-R1 signaling complex (TNF-RSC) following polyubiquitination of TNF-RSC components by BIRC2 and/or BIRC3 and to conjugate linear polyubiquitin to IKBKG and possibly other components contributing to the stability of the complex. The LUBAC complex is also involved in innate immunity by conjugating linear polyubiquitin chains at the surface of bacteria invading the cytosol to form the ubiquitin coat surrounding bacteria. LUBAC is not able to initiate formation of the bacterial ubiquitin coat, and can only promote formation of linear polyubiquitins on pre-existing ubiquitin. Recruited to the surface of bacteria by RNF213, which initiates the bacterial ubiquitin coat. The bacterial ubiquitin coat acts as an 'eat-me' signal for xenophagy and promotes NF-kappa-B activation. Together with OTULIN, the LUBAC complex regulates the canonical Wnt signaling during angiogenesis. RNF31 is required for linear ubiquitination of BCL10, thereby promoting TCR-induced NF-kappa-B activation. Binds polyubiquitin of different linkage types. The polypeptide is E3 ubiquitin-protein ligase RNF31 (Mus musculus (Mouse)).